A 492-amino-acid chain; its full sequence is Ketol-acid reductoisomerase (NADP(+)) (492 aa).

The region spanning 15–208 (AQLGKCRFMA…GAHRAGVLES (194 aa)) is the KARI N-terminal Rossmann domain. Residues 45–48 (CGAQ), Arg-68, Arg-76, Ser-78, and 108–110 (DKQ) each bind NADP(+). His-132 is an active-site residue. Gly-158 is a binding site for NADP(+). 2 KARI C-terminal knotted domains span residues 209 to 344 (SFVA…NSPE) and 345 to 485 (YDGK…MTDM). Residues Asp-217, Glu-221, Glu-389, and Glu-393 each coordinate Mg(2+). Residue Ser-414 participates in substrate binding.

It belongs to the ketol-acid reductoisomerase family. Requires Mg(2+) as cofactor.

The enzyme catalyses (2R)-2,3-dihydroxy-3-methylbutanoate + NADP(+) = (2S)-2-acetolactate + NADPH + H(+). It catalyses the reaction (2R,3R)-2,3-dihydroxy-3-methylpentanoate + NADP(+) = (S)-2-ethyl-2-hydroxy-3-oxobutanoate + NADPH + H(+). The protein operates within amino-acid biosynthesis; L-isoleucine biosynthesis; L-isoleucine from 2-oxobutanoate: step 2/4. It functions in the pathway amino-acid biosynthesis; L-valine biosynthesis; L-valine from pyruvate: step 2/4. Its function is as follows. Involved in the biosynthesis of branched-chain amino acids (BCAA). Catalyzes an alkyl-migration followed by a ketol-acid reduction of (S)-2-acetolactate (S2AL) to yield (R)-2,3-dihydroxy-isovalerate. In the isomerase reaction, S2AL is rearranged via a Mg-dependent methyl migration to produce 3-hydroxy-3-methyl-2-ketobutyrate (HMKB). In the reductase reaction, this 2-ketoacid undergoes a metal-dependent reduction by NADPH to yield (R)-2,3-dihydroxy-isovalerate. This chain is Ketol-acid reductoisomerase (NADP(+)), found in Photorhabdus laumondii subsp. laumondii (strain DSM 15139 / CIP 105565 / TT01) (Photorhabdus luminescens subsp. laumondii).